Consider the following 152-residue polypeptide: UPF0266 membrane protein YobD (152 aa).

3 helical membrane passes run 6–26, 45–65, and 67–87; these read LVLILFIAVLLAFAIYDQFIM, IDSVIFVGLIVILIYNSVTNH, and ALITTWLLSALALMGFYIFWI.

Belongs to the UPF0266 family.

Its subcellular location is the cell inner membrane. The protein is UPF0266 membrane protein YobD of Escherichia coli O127:H6 (strain E2348/69 / EPEC).